The sequence spans 182 residues: Ribosome-recycling factor (182 aa).

It belongs to the RRF family.

The protein resides in the cytoplasm. Its function is as follows. Responsible for the release of ribosomes from messenger RNA at the termination of protein biosynthesis. May increase the efficiency of translation by recycling ribosomes from one round of translation to another. This is Ribosome-recycling factor from Parasynechococcus marenigrum (strain WH8102).